The chain runs to 427 residues: Putative tyrosine recombinase XerC (427 aa).

The Core-binding (CB) domain occupies 1–81; it reads MTPQQLTEEY…HLRTIWGYAI (81 aa). Residues 116–305 form the Tyr recombinase domain; the sequence is RARSWLSMQV…DYDHMRAVLH (190 aa). Active-site residues include Arg156, Lys183, His256, Arg259, and His283. The O-(3'-phospho-DNA)-tyrosine intermediate role is filled by Tyr292. 2 disordered regions span residues 323–384 and 401–427; these read SGSP…PPDT and RAATASAVPAATSGSGGRGSAARDSLA. Positions 350-362 are enriched in basic and acidic residues; it reads ARTEPSEPREHTQ. Positions 402–413 are enriched in low complexity; that stretch reads AATASAVPAATS.

The protein belongs to the 'phage' integrase family.

It localises to the cytoplasm. Its function is as follows. Site-specific tyrosine recombinase, which acts by catalyzing the cutting and rejoining of the recombining DNA molecules. This Pseudomonas aeruginosa protein is Putative tyrosine recombinase XerC.